A 268-amino-acid chain; its full sequence is MAVFADLDLRAGSDLKALRGLVENAAHLGYSVVAINHVVEFKEKKQEIEKPVAVSELFTTLPIVQGKSKPIKILTRLTIIVSDPSHCNVLRATSSRVRLYDIVAVFPKTEKLFHVACTHLDVDLVCITVTEKLPFYFKRPPINVAIDRGVGFELLYSPAIKDSTMRRYTISNALNLMQVCKGKNVIISSAAERPLEIRGPYDVANLGLLFGLSESDAKAAVSTNCRAVLLHGETRKTAFGIISTVKKPRTSEADDDSLPACKKAKCES.

A2 is subject to N-acetylalanine. Position 251 is a phosphoserine (S251).

It belongs to the eukaryotic/archaeal RNase P protein component 3 family. As to quaternary structure, component of nuclear RNase P and RNase MRP ribonucleoproteins. RNase P consists of a catalytic RNA moiety and about 10 protein subunits; POP1, POP4, POP5, POP7, RPP14, RPP21, RPP25, RPP30, RPP38 and RPP40. Within the RNase P complex, POP1, POP7 and RPP25 form the 'finger' subcomplex, POP5, RPP14, RPP40 and homodimeric RPP30 form the 'palm' subcomplex, and RPP21, POP4 and RPP38 form the 'wrist' subcomplex. All subunits of the RNase P complex interact with the catalytic RNA. Several subunits of RNase P are also part of the RNase MRP complex. RNase MRP consists of a catalytic RNA moiety and about 8 protein subunits; POP1, POP7, RPP25, RPP30, RPP38, RPP40 and possibly also POP4 and POP5.

The protein localises to the nucleus. It localises to the nucleolus. Component of ribonuclease P, a ribonucleoprotein complex that generates mature tRNA molecules by cleaving their 5'-ends. Also a component of the MRP ribonuclease complex, which cleaves pre-rRNA sequences. This Bos taurus (Bovine) protein is Ribonuclease P protein subunit p30 (RPP30).